Reading from the N-terminus, the 200-residue chain is Ribonuclease HII (200 aa).

One can recognise an RNase H type-2 domain in the interval 10–200 (LIEAGCDEAG…LGDGQLNLNF (191 aa)). Residues Asp16, Glu17, and Asp108 each coordinate a divalent metal cation.

Belongs to the RNase HII family. Mn(2+) is required as a cofactor. It depends on Mg(2+) as a cofactor.

It localises to the cytoplasm. The catalysed reaction is Endonucleolytic cleavage to 5'-phosphomonoester.. In terms of biological role, endonuclease that specifically degrades the RNA of RNA-DNA hybrids. This chain is Ribonuclease HII, found in Bacteroides thetaiotaomicron (strain ATCC 29148 / DSM 2079 / JCM 5827 / CCUG 10774 / NCTC 10582 / VPI-5482 / E50).